Reading from the N-terminus, the 251-residue chain is GTP cyclohydrolase 1 type 2 homolog (251 aa).

Residues His-64, His-65, Asp-102, His-219, and Glu-223 each coordinate a divalent metal cation.

Belongs to the GTP cyclohydrolase I type 2/NIF3 family. In terms of assembly, homohexamer.

This chain is GTP cyclohydrolase 1 type 2 homolog, found in Chlamydia muridarum (strain MoPn / Nigg).